Reading from the N-terminus, the 816-residue chain is Phosphatidylinositol 4-kinase beta (816 aa).

Disordered regions lie at residues 1–30 (MGDT…GSLL), 101–120 (EDEM…RRRR), and 248–318 (AHRK…SFSS). Position 2 is an N-acetylglycine (G2). The segment at 2-68 (GDTIVEPAPL…VKLLHGGVAI (67 aa)) is interaction with ACBD3. The PIK helical domain maps to 29–242 (LLSVITEGVG…GTKLRKLILS (214 aa)). A Phosphoserine modification is found at S258. A Phosphothreonine modification is found at T263. Phosphoserine is present on residues S266, S275, S277, S284, and S294. 2 stretches are compositionally biased toward polar residues: residues 278–297 (DATA…SNPK) and 306–318 (SSST…SFSS). S428 carries the phosphoserine modification. The residue at position 438 (T438) is a Phosphothreonine. Phosphoserine is present on S511. Residues T517 and T519 each carry the phosphothreonine modification. A PI3K/PI4K catalytic domain is found at 535–801 (EPWQEKVRRI…MVDGSMRSIT (267 aa)). The interval 541-547 (VRRIREG) is G-loop. Positions 668–676 (QVKDRHNGN) are catalytic loop. The tract at residues 687–711 (HIDFGFILSSSPRNLGFETSAFKLT) is activation loop.

It belongs to the PI3/PI4-kinase family. Type III PI4K subfamily. In terms of assembly, interacts with ARF1 and ARF3 in the Golgi complex, but not with ARF4, ARF5 or ARF6. Interacts with NCS1/FREQ in a calcium-independent manner. Interacts with CALN1/CABP8 and CALN2/CABP7; in a calcium-dependent manner; this interaction competes with NCS1/FREQ binding. Interacts with ACBD3. Interacts with ARMH3, YWHAB, YWHAE, YWHAG, YWHAH, YWHAQ, YWHAZ and SFN. Interacts with GGA2 (via VHS domain); the interaction is important for PI4KB location at the Golgi apparatus membrane. Interacts with ATG9A. The cofactor is Mg(2+). Mn(2+) serves as cofactor.

It is found in the endomembrane system. It localises to the mitochondrion outer membrane. The protein resides in the rough endoplasmic reticulum membrane. Its subcellular location is the golgi apparatus. The protein localises to the golgi apparatus membrane. It catalyses the reaction a 1,2-diacyl-sn-glycero-3-phospho-(1D-myo-inositol) + ATP = a 1,2-diacyl-sn-glycero-3-phospho-(1D-myo-inositol 4-phosphate) + ADP + H(+). Inhibited by wortmannin. Increased kinase activity upon interaction with NCS1/FREQ. Phosphorylates phosphatidylinositol (PI) in the first committed step in the production of the second messenger inositol-1,4,5,-trisphosphate (PIP). May regulate Golgi disintegration/reorganization during mitosis, possibly via its phosphorylation. Involved in Golgi-to-plasma membrane trafficking. In Bos taurus (Bovine), this protein is Phosphatidylinositol 4-kinase beta (PI4KB).